Reading from the N-terminus, the 639-residue chain is Protein phosphatase EYA4 (639 aa).

Residue Met1 is modified to N-acetylmethionine. 3 disordered regions span residues 1–72, 210–232, and 300–368; these read MEDS…GGEN, QTQS…PQPG, and ADGT…DSDL. A Glycyl lysine isopeptide (Lys-Gly) (interchain with G-Cter in SUMO2) cross-link involves residue Lys14. Residues 18 to 30 are compositionally biased toward polar residues; sequence ESDVSQSQNSRSM. Residue Lys52 forms a Glycyl lysine isopeptide (Lys-Gly) (interchain with G-Cter in SUMO2) linkage. Positions 56-66 are enriched in low complexity; it reads SNLSSTSVTTN. Polar residues predominate over residues 300 to 334; the sequence is ADGTPSSTSTYQLQESLPGLTNQPGEFDTMQSPST. A Phosphoserine modification is found at Ser361. The active-site Nucleophile is Asp375. 3 residues coordinate Mg(2+): Asp375, Asp377, and Asp603. Asp377 serves as the catalytic Proton donor.

This sequence belongs to the HAD-like hydrolase superfamily. EYA family. In terms of assembly, interacts with SIX3; translocates EYA4 from the cytoplasm to the nucleus and promotes activation of their target genes. Requires Mg(2+) as cofactor. Highly expressed in heart and skeletal muscle.

It localises to the cytoplasm. The protein localises to the nucleus. The enzyme catalyses O-phospho-L-tyrosyl-[protein] + H2O = L-tyrosyl-[protein] + phosphate. In terms of biological role, tyrosine phosphatase that specifically dephosphorylates 'Tyr-142' of histone H2AX (H2AXY142ph). 'Tyr-142' phosphorylation of histone H2AX plays a central role in DNA repair and acts as a mark that distinguishes between apoptotic and repair responses to genotoxic stress. Promotes efficient DNA repair by dephosphorylating H2AX, promoting the recruitment of DNA repair complexes containing MDC1. Its function as histone phosphatase probably explains its role in transcription regulation during organogenesis. May be involved in development of the eye. This Homo sapiens (Human) protein is Protein phosphatase EYA4 (EYA4).